The following is a 396-amino-acid chain: Probable sugar efflux transporter (396 aa).

The next 12 helical transmembrane spans lie at 15–35 (VVTLAIAAFIFNTTEFVPVGL), 50–70 (VGIMLTIYAWVVAVMSLPFML), 81–101 (LICLFVLFIASHVLSFLAWNF), 103–123 (VLVISRIGIAFTHAIFWSITA), 136–156 (AQALSLIATGTALAMVLGLPI), 169–189 (TFFAIGMGALITLICLIKLLP), 209–229 (PALMSLYLLTAVVVTAHYTAY), 246–266 (FATVLLLILGGAGIIGSLVFG), 275–295 (LLVSIAISLLVVCLLLLLPAA), 301–321 (LALLSIFWGIAIMVIGLGMQV), 333–353 (VAMALFSGIFNIGIGAGALAG), and 364–384 (TIGYIGAVPACAALVWAVLIF).

This sequence belongs to the major facilitator superfamily. SotB (TC 2.A.1.2) family.

It is found in the cell inner membrane. Functionally, involved in the efflux of sugars. The physiological role may be the reduction of the intracellular concentration of toxic sugars or sugar metabolites. This chain is Probable sugar efflux transporter, found in Salmonella arizonae (strain ATCC BAA-731 / CDC346-86 / RSK2980).